Consider the following 1887-residue polypeptide: Nuclear pore membrane glycoprotein 210 (1887 aa).

A signal peptide spans 1 to 26; it reads MAARGRGLLLLTLSVLLAAGPSAAAA. At 27–1808 the chain is on the perinuclear space side; it reads KLNIPKVLLP…LFQHFLDSYQ (1782 aa). Asparagine 44, asparagine 337, asparagine 405, asparagine 484, asparagine 681, asparagine 801, asparagine 926, asparagine 1039, asparagine 1116, asparagine 1135, asparagine 1362, and asparagine 1441 each carry an N-linked (GlcNAc...) asparagine glycan. A BIG2 domain is found at 1078–1151; sequence FPPFRLMPRK…VQAVDAETGK (74 aa). A helical transmembrane segment spans residues 1809 to 1829; that stretch reads VMFFTLFALLAGTAVMIIAYH. Residues 1830–1887 lie on the Cytoplasmic side of the membrane; that stretch reads TVCTPRDLAVPAALTPRASPGHSPHYFAASSPTSPNALPPARKASPPSGLWSPAYASH. Threonine 1844 is subject to Phosphothreonine. Residues 1853–1887 are disordered; it reads PHYFAASSPTSPNALPPARKASPPSGLWSPAYASH. Residues serine 1874, serine 1877, serine 1881, and serine 1886 each carry the phosphoserine modification.

Belongs to the NUP210 family. Forms dimers and possibly higher-order oligomers. In terms of processing, N-glycosylated, but not all potential glycosylation sites may be used. Contains high-mannose type oligosaccharides. Post-translationally, phosphorylated at Ser-1881 in mitosis specifically; not phosphorylated in interphase. As to expression, ubiquitous expression, with highest levels in lung, liver, pancreas, testis, and ovary, intermediate levels in brain, kidney, and spleen, and lowest levels in heart and skeletal muscle.

The protein localises to the nucleus. It localises to the nuclear pore complex. Its subcellular location is the nucleus membrane. The protein resides in the endoplasmic reticulum membrane. In terms of biological role, nucleoporin essential for nuclear pore assembly and fusion, nuclear pore spacing, as well as structural integrity. The polypeptide is Nuclear pore membrane glycoprotein 210 (NUP210) (Homo sapiens (Human)).